The chain runs to 374 residues: Lipoyl synthase, mitochondrial (374 aa).

Residues cysteine 101, cysteine 106, cysteine 112, cysteine 132, cysteine 136, cysteine 139, and serine 347 each coordinate [4Fe-4S] cluster. Positions 117 to 336 (ENGTQTATIM…EERGNDLGFL (220 aa)) constitute a Radical SAM core domain.

The protein belongs to the radical SAM superfamily. Lipoyl synthase family. [4Fe-4S] cluster serves as cofactor.

It is found in the mitochondrion. The enzyme catalyses [[Fe-S] cluster scaffold protein carrying a second [4Fe-4S](2+) cluster] + N(6)-octanoyl-L-lysyl-[protein] + 2 oxidized [2Fe-2S]-[ferredoxin] + 2 S-adenosyl-L-methionine + 4 H(+) = [[Fe-S] cluster scaffold protein] + N(6)-[(R)-dihydrolipoyl]-L-lysyl-[protein] + 4 Fe(3+) + 2 hydrogen sulfide + 2 5'-deoxyadenosine + 2 L-methionine + 2 reduced [2Fe-2S]-[ferredoxin]. Its pathway is protein modification; protein lipoylation via endogenous pathway; protein N(6)-(lipoyl)lysine from octanoyl-[acyl-carrier-protein]: step 2/2. Functionally, catalyzes the radical-mediated insertion of two sulfur atoms into the C-6 and C-8 positions of the octanoyl moiety bound to the lipoyl domains of lipoate-dependent enzymes, thereby converting the octanoylated domains into lipoylated derivatives. This chain is Lipoyl synthase, mitochondrial, found in Drosophila pseudoobscura pseudoobscura (Fruit fly).